The chain runs to 555 residues: Protein NRT1/ PTR FAMILY 5.12 (555 aa).

A run of 2 helical transmembrane segments spans residues 53–73 and 83–103; these read FAYFGIASNLITYFTEALGES and LWLGTAAFLPLIWGSIADSFL. Position 108 is a phosphothreonine (T108). 10 consecutive transmembrane segments (helical) span residues 109–129, 148–168, 190–210, 221–241, 315–335, 357–377, 401–421, 443–463, 482–502, and 526–546; these read ILLTSSFYIMGLGLLTFSATI, VIIFFCALYLIALGEGGFKVC, SYFNWLYFAISIGILTTRLVT, LGYAIPCLSMMLALFLFLLGI, AVLSLIPIWLCSLVFGIVFAQ, VPAATLQCFISLAILVFIPIY, ISTGIFLSIISMVIAALVEMK, VCWLIPQYILFGVSDVFTMVG, ALYLSIIGIGNFLSSFMVSVI, and YFYWLLACLSSLAFIFTVYFA.

This sequence belongs to the major facilitator superfamily. Proton-dependent oligopeptide transporter (POT/PTR) (TC 2.A.17) family. In terms of tissue distribution, expressed in shoots and roots.

The protein resides in the membrane. In Arabidopsis thaliana (Mouse-ear cress), this protein is Protein NRT1/ PTR FAMILY 5.12 (NPF5.12).